The chain runs to 241 residues: Uridylate kinase (241 aa).

12–15 contacts ATP; the sequence is KISG. Residues 20–25 form an involved in allosteric activation by GTP region; the sequence is GDKGNG. Gly54 provides a ligand contact to UMP. 2 residues coordinate ATP: Gly55 and Arg59. UMP is bound by residues Asp74 and 135-142; that span reads TGNPYFST. Residues Asn163, Tyr169, and Asp172 each contribute to the ATP site.

The protein belongs to the UMP kinase family. In terms of assembly, homohexamer.

It localises to the cytoplasm. The catalysed reaction is UMP + ATP = UDP + ADP. It functions in the pathway pyrimidine metabolism; CTP biosynthesis via de novo pathway; UDP from UMP (UMPK route): step 1/1. Its activity is regulated as follows. Allosterically activated by GTP. Inhibited by UTP. Functionally, catalyzes the reversible phosphorylation of UMP to UDP. This chain is Uridylate kinase, found in Lactobacillus helveticus (strain DPC 4571).